Consider the following 198-residue polypeptide: Uracil phosphoribosyltransferase homolog (198 aa).

This sequence belongs to the UPRTase family.

The protein localises to the plastid. It localises to the chloroplast. The sequence is that of Uracil phosphoribosyltransferase homolog from Pyropia yezoensis (Susabi-nori).